Reading from the N-terminus, the 180-residue chain is Large ribosomal subunit protein uL6 (180 aa).

Belongs to the universal ribosomal protein uL6 family. In terms of assembly, part of the 50S ribosomal subunit.

In terms of biological role, this protein binds to the 23S rRNA, and is important in its secondary structure. It is located near the subunit interface in the base of the L7/L12 stalk, and near the tRNA binding site of the peptidyltransferase center. The chain is Large ribosomal subunit protein uL6 from Lachnoclostridium phytofermentans (strain ATCC 700394 / DSM 18823 / ISDg) (Clostridium phytofermentans).